The sequence spans 876 residues: Leucine--tRNA ligase (876 aa).

Positions 42–52 match the 'HIGH' region motif; it reads PYPSGKLHMGH. Positions 634–638 match the 'KMSKS' region motif; sequence KMSKS. K637 lines the ATP pocket.

This sequence belongs to the class-I aminoacyl-tRNA synthetase family.

It localises to the cytoplasm. It catalyses the reaction tRNA(Leu) + L-leucine + ATP = L-leucyl-tRNA(Leu) + AMP + diphosphate. In Neisseria meningitidis serogroup C (strain 053442), this protein is Leucine--tRNA ligase.